A 161-amino-acid polypeptide reads, in one-letter code: Nucleotide-binding protein Rmet_2899 (161 aa).

The protein belongs to the YajQ family.

Its function is as follows. Nucleotide-binding protein. The sequence is that of Nucleotide-binding protein Rmet_2899 from Cupriavidus metallidurans (strain ATCC 43123 / DSM 2839 / NBRC 102507 / CH34) (Ralstonia metallidurans).